A 554-amino-acid chain; its full sequence is Dihydroxy-acid dehydratase (554 aa).

Position 78 (Asp78) interacts with Mg(2+). Cys119 contacts [2Fe-2S] cluster. Mg(2+) is bound by residues Asp120 and Lys121. Lys121 carries the N6-carboxylysine modification. Cys191 contacts [2Fe-2S] cluster. Residue Glu444 participates in Mg(2+) binding. Catalysis depends on Ser470, which acts as the Proton acceptor.

This sequence belongs to the IlvD/Edd family. In terms of assembly, homodimer. [2Fe-2S] cluster is required as a cofactor. The cofactor is Mg(2+).

The catalysed reaction is (2R)-2,3-dihydroxy-3-methylbutanoate = 3-methyl-2-oxobutanoate + H2O. It catalyses the reaction (2R,3R)-2,3-dihydroxy-3-methylpentanoate = (S)-3-methyl-2-oxopentanoate + H2O. It participates in amino-acid biosynthesis; L-isoleucine biosynthesis; L-isoleucine from 2-oxobutanoate: step 3/4. It functions in the pathway amino-acid biosynthesis; L-valine biosynthesis; L-valine from pyruvate: step 3/4. Functions in the biosynthesis of branched-chain amino acids. Catalyzes the dehydration of (2R,3R)-2,3-dihydroxy-3-methylpentanoate (2,3-dihydroxy-3-methylvalerate) into 2-oxo-3-methylpentanoate (2-oxo-3-methylvalerate) and of (2R)-2,3-dihydroxy-3-methylbutanoate (2,3-dihydroxyisovalerate) into 2-oxo-3-methylbutanoate (2-oxoisovalerate), the penultimate precursor to L-isoleucine and L-valine, respectively. This Nitratidesulfovibrio vulgaris (strain ATCC 29579 / DSM 644 / CCUG 34227 / NCIMB 8303 / VKM B-1760 / Hildenborough) (Desulfovibrio vulgaris) protein is Dihydroxy-acid dehydratase.